A 211-amino-acid polypeptide reads, in one-letter code: Outer-membrane lipoprotein carrier protein (211 aa).

The signal sequence occupies residues 1–24; the sequence is MRNRIIVSACAALAMFAIQAPAHA.

The protein belongs to the LolA family. Monomer.

It is found in the periplasm. Participates in the translocation of lipoproteins from the inner membrane to the outer membrane. Only forms a complex with a lipoprotein if the residue after the N-terminal Cys is not an aspartate (The Asp acts as a targeting signal to indicate that the lipoprotein should stay in the inner membrane). This chain is Outer-membrane lipoprotein carrier protein, found in Cupriavidus necator (strain ATCC 17699 / DSM 428 / KCTC 22496 / NCIMB 10442 / H16 / Stanier 337) (Ralstonia eutropha).